A 475-amino-acid polypeptide reads, in one-letter code: Probable GABA permease (475 aa).

12 helical membrane passes run 27-47, 48-68, 105-125, 127-147, 163-183, 211-231, 250-270, 296-316, 345-365, 368-388, 413-433, and 438-458; these read VTMLSIAGVIGAGLFVGSGHA, IAAAGPAALLAYLIAGTLVVL, LYWWFWVLVIPLEAIAAAAIL, AWFPAIDTWIFALAVTFLLTV, FALLKVIAIIAFIVLGAVAIV, AVLGALLTTMFSFMGTEIVTI, VIWRIGLFYLVSIFIVISIVP, LIVDLVVLVAVASCLNSAIYT, PAVLASTAVGFLTTIVNYFAP, VFTFLLASSGAVALLVYLVIA, PWLTWAVILFIVAALSIMLIM, and HEVFATALLTIFTVCLGLLNA.

The protein belongs to the amino acid-polyamine-organocation (APC) superfamily. Amino acid transporter (AAT) (TC 2.A.3.1) family.

Its subcellular location is the membrane. In terms of biological role, involved in the degradation of beta-alanine. The sequence is that of Probable GABA permease (bauD) from Pseudomonas aeruginosa (strain ATCC 15692 / DSM 22644 / CIP 104116 / JCM 14847 / LMG 12228 / 1C / PRS 101 / PAO1).